Reading from the N-terminus, the 1159-residue chain is DNA-directed RNA polymerase subunit beta' (1159 aa).

Residues Asp398, Asp400, and Asp402 each contribute to the Mg(2+) site. Positions 741, 815, 822, and 825 each coordinate Zn(2+).

It belongs to the RNA polymerase beta' chain family. In terms of assembly, the RNAP catalytic core consists of 2 alpha, 1 beta, 1 beta' and 1 omega subunit. When a sigma factor is associated with the core the holoenzyme is formed, which can initiate transcription. Requires Mg(2+) as cofactor. Zn(2+) is required as a cofactor.

The catalysed reaction is RNA(n) + a ribonucleoside 5'-triphosphate = RNA(n+1) + diphosphate. DNA-dependent RNA polymerase catalyzes the transcription of DNA into RNA using the four ribonucleoside triphosphates as substrates. This chain is DNA-directed RNA polymerase subunit beta', found in Porphyromonas cangingivalis.